Here is a 270-residue protein sequence, read N- to C-terminus: Sulfur carrier protein FdhD (270 aa).

2 stretches are compositionally biased toward basic and acidic residues: residues 1-10 (MSMQDHDRTE) and 20-30 (RHLDGSSRPDW). Positions 1-30 (MSMQDHDRTEQGMTSLAVTRHLDGSSRPDW) are disordered. Cys-117 functions as the Cysteine persulfide intermediate in the catalytic mechanism.

This sequence belongs to the FdhD family.

The protein resides in the cytoplasm. Its function is as follows. Required for formate dehydrogenase (FDH) activity. Acts as a sulfur carrier protein that transfers sulfur from IscS to the molybdenum cofactor prior to its insertion into FDH. In Chromobacterium violaceum (strain ATCC 12472 / DSM 30191 / JCM 1249 / CCUG 213 / NBRC 12614 / NCIMB 9131 / NCTC 9757 / MK), this protein is Sulfur carrier protein FdhD.